Consider the following 202-residue polypeptide: Cilia- and flagella-associated protein 418 (202 aa).

A disordered region spans residues D71 to A90. The segment covering T74–A90 has biased composition (polar residues).

Ubiquitously expressed during early development and in adult tissues including the eye, brain, heart and kidney.

It localises to the cytoplasm. It is found in the photoreceptor inner segment. Functionally, may be involved in photoreceptor outer segment disk morphogenesis. The sequence is that of Cilia- and flagella-associated protein 418 (cfap418) from Danio rerio (Zebrafish).